The sequence spans 207 residues: Thiamine-phosphate synthase (207 aa).

4-amino-2-methyl-5-(diphosphooxymethyl)pyrimidine-binding positions include 37 to 41 and asparagine 69; that span reads QYRHK. The Mg(2+) site is built by aspartate 70 and aspartate 89. 4-amino-2-methyl-5-(diphosphooxymethyl)pyrimidine-binding residues include serine 108 and lysine 138. Residues glycine 165 and 185–186 each bind 2-[(2R,5Z)-2-carboxy-4-methylthiazol-5(2H)-ylidene]ethyl phosphate; that span reads IS.

Belongs to the thiamine-phosphate synthase family. The cofactor is Mg(2+).

It carries out the reaction 2-[(2R,5Z)-2-carboxy-4-methylthiazol-5(2H)-ylidene]ethyl phosphate + 4-amino-2-methyl-5-(diphosphooxymethyl)pyrimidine + 2 H(+) = thiamine phosphate + CO2 + diphosphate. The catalysed reaction is 2-(2-carboxy-4-methylthiazol-5-yl)ethyl phosphate + 4-amino-2-methyl-5-(diphosphooxymethyl)pyrimidine + 2 H(+) = thiamine phosphate + CO2 + diphosphate. It catalyses the reaction 4-methyl-5-(2-phosphooxyethyl)-thiazole + 4-amino-2-methyl-5-(diphosphooxymethyl)pyrimidine + H(+) = thiamine phosphate + diphosphate. It functions in the pathway cofactor biosynthesis; thiamine diphosphate biosynthesis; thiamine phosphate from 4-amino-2-methyl-5-diphosphomethylpyrimidine and 4-methyl-5-(2-phosphoethyl)-thiazole: step 1/1. Functionally, condenses 4-methyl-5-(beta-hydroxyethyl)thiazole monophosphate (THZ-P) and 2-methyl-4-amino-5-hydroxymethyl pyrimidine pyrophosphate (HMP-PP) to form thiamine monophosphate (TMP). The polypeptide is Thiamine-phosphate synthase (Janthinobacterium sp. (strain Marseille) (Minibacterium massiliensis)).